We begin with the raw amino-acid sequence, 631 residues long: Phosphomethylpyrimidine synthase (631 aa).

Residues asparagine 239, methionine 268, tyrosine 297, histidine 333, 353-355 (SRG), 394-397 (DGLR), and glutamate 433 each bind substrate. Histidine 437 contacts Zn(2+). Tyrosine 460 is a substrate binding site. Residue histidine 501 coordinates Zn(2+). [4Fe-4S] cluster contacts are provided by cysteine 581, cysteine 584, and cysteine 589.

Belongs to the ThiC family. As to quaternary structure, homodimer. [4Fe-4S] cluster is required as a cofactor.

It carries out the reaction 5-amino-1-(5-phospho-beta-D-ribosyl)imidazole + S-adenosyl-L-methionine = 4-amino-2-methyl-5-(phosphooxymethyl)pyrimidine + CO + 5'-deoxyadenosine + formate + L-methionine + 3 H(+). The protein operates within cofactor biosynthesis; thiamine diphosphate biosynthesis. Catalyzes the synthesis of the hydroxymethylpyrimidine phosphate (HMP-P) moiety of thiamine from aminoimidazole ribotide (AIR) in a radical S-adenosyl-L-methionine (SAM)-dependent reaction. The polypeptide is Phosphomethylpyrimidine synthase (Salmonella agona (strain SL483)).